The primary structure comprises 285 residues: MISMNPIMIRNNLSRSSSPAAPPITNHTSTVDYFSLKPKLSLDTSSQNDSISTQSSNNDDTHSDQQDHTLYTHNHYFDDDYDDDEDEDFDIRDQLLDPFDKITISNCNEEYYSPLTPFDDQTTSPQDSIISSKSSNKSTTVVPPPQFQLTLPKLTTYSFLIVDDNIINLKILNRILLKLFPKCHIVQIQDSKLVKDILHKQPFDSIFIDIEMPDVNGIDIAQFVRQDSKFDDMGMVAVTTRNSTQDLELFKQCGIDCTFHKPLNYSLDFMANSIDDIIITRKNKI.

Composition is skewed to low complexity over residues 43–58 and 128–138; these read DTSS…SSNN and SIISSKSSNKS. Disordered stretches follow at residues 43-66 and 114-142; these read DTSS…SDQQ and PLTP…TTVV. Residues 158–276 enclose the Response regulatory domain; it reads SFLIVDDNII…LDFMANSIDD (119 aa). Aspartate 209 is subject to 4-aspartylphosphate.

In terms of biological role, required for stress adaptation, morphogenesis and virulence. This chain is Stress response regulator protein 1 (SRR1), found in Candida dubliniensis (strain CD36 / ATCC MYA-646 / CBS 7987 / NCPF 3949 / NRRL Y-17841) (Yeast).